Reading from the N-terminus, the 397-residue chain is LIM/homeobox protein Lhx9 (397 aa).

LIM zinc-binding domains lie at 69–130 and 131–193; these read ALCA…RFSV and QRCA…LLQG. Disordered stretches follow at residues 248 to 272, 330 to 365, and 378 to 397; these read ENEA…RMRT, ENGG…LTDL, and SNMD…TNLF. Positions 267 to 326 form a DNA-binding region, homeobox; it reads TKRMRTSFKHHQLRTMKSYFAINHNPDAKDLKQLAQKTGLTKRVLQVWFQNARAKFRRNL. Residues 353–365 are compositionally biased toward low complexity; sequence LTPPGTATTLTDL. The segment covering 387–397 has biased composition (polar residues); it reads SPSQTTLTNLF.

Interacts with LDB1 and LDB2. As to expression, expressed in the dorsal thalamus and inner nuclei of the cerebellum.

It localises to the nucleus. Functionally, involved in gonadal development. The polypeptide is LIM/homeobox protein Lhx9 (Lhx9) (Mus musculus (Mouse)).